The chain runs to 118 residues: Small ribosomal subunit protein bS6 (118 aa).

The tract at residues 98 to 118 (TAAPAAKVAPVETAPAAEAAE) is disordered. The span at 99-118 (AAPAAKVAPVETAPAAEAAE) shows a compositional bias: low complexity.

The protein belongs to the bacterial ribosomal protein bS6 family.

Functionally, binds together with bS18 to 16S ribosomal RNA. This chain is Small ribosomal subunit protein bS6, found in Geobacter metallireducens (strain ATCC 53774 / DSM 7210 / GS-15).